Consider the following 703-residue polypeptide: Polyribonucleotide nucleotidyltransferase (703 aa).

Residues aspartate 484 and aspartate 490 each contribute to the Mg(2+) site. Positions 551 to 610 (PQMIRMQIDPDKIREVIGPGGKTIHKIVDETGCKIDIEDDGSLFIMATDEEAAKKARFFV) constitute a KH domain. Residues 620-694 (GKTYMGTVKR…RQGRVNLSRK (75 aa)) enclose the S1 motif domain.

It belongs to the polyribonucleotide nucleotidyltransferase family. The cofactor is Mg(2+).

It is found in the cytoplasm. It catalyses the reaction RNA(n+1) + phosphate = RNA(n) + a ribonucleoside 5'-diphosphate. In terms of biological role, involved in mRNA degradation. Catalyzes the phosphorolysis of single-stranded polyribonucleotides processively in the 3'- to 5'-direction. This is Polyribonucleotide nucleotidyltransferase from Syntrophomonas wolfei subsp. wolfei (strain DSM 2245B / Goettingen).